The primary structure comprises 652 residues: 2-oxoglutarate carboxylase large subunit (652 aa).

Positions 26-288 constitute a Pyruvate carboxyltransferase domain; that stretch reads ILITDLTPRD…DTGIDMKKLD (263 aa). Substrate-binding positions include 34–38 and Arg105; that span reads RDGQQ. Asp35 contacts a divalent metal cation. Lys196, His227, and His229 together coordinate a divalent metal cation. At Lys196 the chain carries N6-carboxylysine. Thr362 contacts substrate. The Biotinyl-binding domain occupies 563–643; it reads AEEKGIPKAT…TPDDALLRIK (81 aa). The residue at position 609 (Lys609) is an N6-biotinyllysine.

As to quaternary structure, heterohexadecamer of 8 large subunits and 8 small subunits. It depends on Mg(2+) as a cofactor. The cofactor is Mn(2+). Requires Co(2+) as cofactor. In terms of processing, biotinylated.

It carries out the reaction hydrogencarbonate + 2-oxoglutarate + ATP = (S)-oxalosuccinate + ADP + phosphate + H(+). The chain is 2-oxoglutarate carboxylase large subunit from Hydrogenobacter thermophilus (strain DSM 6534 / IAM 12695 / TK-6).